The following is a 504-amino-acid chain: ADP,ATP carrier protein 3 (504 aa).

12 helical membrane-spanning segments follow: residues 23-43, 59-79, 90-110, 146-166, 183-203, 230-250, 296-316, 329-349, 364-384, 386-406, 449-469, and 473-493; these read LKLF…FGAL, IISF…TILY, YVFY…AYII, YGLM…LMFW, PVLG…LVFF, EMLQ…MLLF, IALL…PWKA, VHFM…FMII, LLTP…IIFI, EIGS…VGAI, FGKS…PTAT, and IIIY…WDVV.

The protein belongs to the ADP/ATP translocase tlc family.

Its subcellular location is the cell membrane. Its function is as follows. Provides the rickettsial cell with host ATP in exchange for rickettsial ADP. This is an obligate exchange system. This energy acquiring activity is an important component of rickettsial parasitism. In Rickettsia bellii (strain RML369-C), this protein is ADP,ATP carrier protein 3 (tlcC).